A 134-amino-acid chain; its full sequence is Ribulose bisphosphate carboxylase small subunit (134 aa).

Belongs to the RuBisCO small chain family. In terms of assembly, heterohexadecamer of 8 large and 8 small subunits.

Its function is as follows. RuBisCO catalyzes two reactions: the carboxylation of D-ribulose 1,5-bisphosphate, the primary event in carbon dioxide fixation, as well as the oxidative fragmentation of the pentose substrate. Both reactions occur simultaneously and in competition at the same active site. Although the small subunit is not catalytic it is essential for maximal activity. This is Ribulose bisphosphate carboxylase small subunit from Bradyrhizobium diazoefficiens (strain JCM 10833 / BCRC 13528 / IAM 13628 / NBRC 14792 / USDA 110).